The sequence spans 364 residues: DNA polymerase IV (364 aa).

Positions 14 to 198 (IIHIDMDAFF…LPVEKFHGVG (185 aa)) constitute a UmuC domain. Aspartate 18 and aspartate 116 together coordinate Mg(2+). Residue glutamate 117 is part of the active site.

It belongs to the DNA polymerase type-Y family. Monomer. Mg(2+) is required as a cofactor.

It is found in the cytoplasm. It catalyses the reaction DNA(n) + a 2'-deoxyribonucleoside 5'-triphosphate = DNA(n+1) + diphosphate. Its function is as follows. Poorly processive, error-prone DNA polymerase involved in untargeted mutagenesis. Copies undamaged DNA at stalled replication forks, which arise in vivo from mismatched or misaligned primer ends. These misaligned primers can be extended by PolIV. Exhibits no 3'-5' exonuclease (proofreading) activity. May be involved in translesional synthesis, in conjunction with the beta clamp from PolIII. This is DNA polymerase IV from Lactococcus lactis subsp. cremoris (strain SK11).